Here is a 433-residue protein sequence, read N- to C-terminus: Signal recognition particle 54 kDa protein (433 aa).

GTP is bound by residues 106-113, 186-190, and 244-247; these read GVEGSGKT, DTAGR, and TKMD.

Belongs to the GTP-binding SRP family. SRP54 subfamily. Part of the signal recognition particle protein translocation system, which is composed of SRP and FtsY. Archaeal SRP consists of a 7S RNA molecule of 300 nucleotides and two protein subunits: SRP54 and SRP19.

The protein localises to the cytoplasm. It catalyses the reaction GTP + H2O = GDP + phosphate + H(+). Its function is as follows. Involved in targeting and insertion of nascent membrane proteins into the cytoplasmic membrane. Binds to the hydrophobic signal sequence of the ribosome-nascent chain (RNC) as it emerges from the ribosomes. The SRP-RNC complex is then targeted to the cytoplasmic membrane where it interacts with the SRP receptor FtsY. The protein is Signal recognition particle 54 kDa protein of Pyrobaculum aerophilum (strain ATCC 51768 / DSM 7523 / JCM 9630 / CIP 104966 / NBRC 100827 / IM2).